The primary structure comprises 147 residues: MVHLTADEKAAVTALWSKVNVEDVGGEALGRLLVVYPWTQRFFDSFGDLSTPAAVMSNAKVKAHGKKVLNAFSDGMAHLDNLKGTFAKLSELHCDKLHVDPENFRLLGNVLVCVLAHHFGKQFTPQLQAAYQKVVAGVAAALAHKYH.

One can recognise a Globin domain in the interval 3 to 147 (HLTADEKAAV…VAAALAHKYH (145 aa)). Positions 64 and 93 each coordinate heme b.

Belongs to the globin family. As to quaternary structure, heterotetramer of two delta chains and two alpha chains. In terms of tissue distribution, red blood cells.

The chain is Hemoglobin subunit delta (HBD) from Carlito syrichta (Philippine tarsier).